The chain runs to 190 residues: Thiamine biosynthesis protein X (190 aa).

The first 22 residues, 1–22, serve as a signal peptide directing secretion; the sequence is MSISRTVFGIAATAALSAALVA. Residue Cys23 is the site of N-palmitoyl cysteine attachment. The S-diacylglycerol cysteine moiety is linked to residue Cys23. The tract at residues 43–68 is disordered; sequence SQNPTSASSTSTSSATTTSSAPVEED. The span at 47–63 shows a compositional bias: low complexity; the sequence is TSASSTSTSSATTTSSA.

The protein resides in the cell membrane. In terms of biological role, is necessary for biosynthesis of the 4-methyl-5-(beta-hydroxyethyl)thiazol component from which thiamine is formed. The protein is Thiamine biosynthesis protein X (thiX) of Corynebacterium glutamicum (strain ATCC 13032 / DSM 20300 / JCM 1318 / BCRC 11384 / CCUG 27702 / LMG 3730 / NBRC 12168 / NCIMB 10025 / NRRL B-2784 / 534).